The primary structure comprises 350 residues: MIELKGISQHFRGAGGTDVHALRDVDLSIDKGEIFGIIGRSGAGKSTLVRVINLLNRPTSGTVTVAGQSLTALNADGLRQARRKIGMIFQHFNLLSSRTVYDNVALPLELAGTPRERIREIVLPLLELVGLDAHKDRYPAQISGGQKQRVGIARALASQPDVLLSDEATSALDPETTRSILDLLRKINRELGLTIVLITHQMEVIKQVCDRVAVLDAGRVVELGRVIDVFLKPRHDVTRALIGEVISQELPPSVLARVESRLVAARERGGRDHLFRLAFTGAGVDQPVLAQAIRNYGLDFNILHGHIDEIQGQAFGSLAILASGESADIDNAMHFLREQGVVVEEINHVV.

Residues 2–242 (IELKGISQHF…PRHDVTRALI (241 aa)) form the ABC transporter domain. 39–46 (GRSGAGKS) serves as a coordination point for ATP.

This sequence belongs to the ABC transporter superfamily. Methionine importer (TC 3.A.1.24) family. The complex is composed of two ATP-binding proteins (MetN), two transmembrane proteins (MetI) and a solute-binding protein (MetQ).

It localises to the cell inner membrane. It carries out the reaction L-methionine(out) + ATP + H2O = L-methionine(in) + ADP + phosphate + H(+). The catalysed reaction is D-methionine(out) + ATP + H2O = D-methionine(in) + ADP + phosphate + H(+). In terms of biological role, part of the ABC transporter complex MetNIQ involved in methionine import. Responsible for energy coupling to the transport system. This Ralstonia nicotianae (strain ATCC BAA-1114 / GMI1000) (Ralstonia solanacearum) protein is Methionine import ATP-binding protein MetN.